Consider the following 823-residue polypeptide: Ubiquitin carboxyl-terminal hydrolase 16 (823 aa).

Residues 22 to 142 form a UBP-type zinc finger; that stretch reads PVCRHIRKGL…QVVDYVRKQA (121 aa). Zn(2+) is bound by residues Cys24, His26, Cys48, Cys51, Cys74, Cys77, Cys82, His90, His94, His103, Cys116, and Cys119. Lys140 is covalently cross-linked (Glycyl lysine isopeptide (Lys-Gly) (interchain with G-Cter in SUMO2)). Residues 146–189 form a disordered region; it reads TPKPAEKDNGNIELENKKLEKESKNEQEREKKENMAKENPPMNS. The span at 149-181 shows a compositional bias: basic and acidic residues; it reads PAEKDNGNIELENKKLEKESKNEQEREKKENMA. Ser189 is subject to Phosphoserine. The USP domain occupies 196–822; sequence KGLSNLGNTC…QAYLLFYERI (627 aa). Cys205 acts as the Nucleophile in catalysis. The segment covering 394-408 has biased composition (basic and acidic residues); that stretch reads SGKKSVNDKNLKKTV. The interval 394–460 is disordered; the sequence is SGKKSVNDKN…AKNQRRQQKI (67 aa). Acidic residues predominate over residues 409–420; the sequence is EDEDQDSEEEKD. Ser415 is subject to Phosphoserine. The segment covering 421 to 430 has biased composition (basic and acidic residues); it reads NDSYIKERSD. Basic residues predominate over residues 438-458; it reads HLQKKAKKQAKKQAKNQRRQQ. 2 positions are modified to phosphoserine: Ser531 and Ser552. Position 554 is a phosphothreonine (Thr554). Catalysis depends on His758, which acts as the Proton acceptor.

Belongs to the peptidase C19 family. USP16 subfamily. As to quaternary structure, homotetramer. Associates with late pre-40S ribosomes. Interacts with CEP78; promoting deubiquitination of tektins. Post-translationally, phosphorylated at the onset of mitosis and dephosphorylated during the metaphase/anaphase transition. Phosphorylation by AURKB enhances the deubiquitinase activity. In terms of tissue distribution, present in all the tissues examined including fetal brain, lung, liver, kidney, and adult heart, brain, placenta, lung, liver, skeletal muscle, kidney and pancreas.

It is found in the nucleus. The protein localises to the cytoplasm. It carries out the reaction Thiol-dependent hydrolysis of ester, thioester, amide, peptide and isopeptide bonds formed by the C-terminal Gly of ubiquitin (a 76-residue protein attached to proteins as an intracellular targeting signal).. Functionally, specifically deubiquitinates 'Lys-120' of histone H2A (H2AK119Ub), a specific tag for epigenetic transcriptional repression, thereby acting as a coactivator. Deubiquitination of histone H2A is a prerequisite for subsequent phosphorylation at 'Ser-11' of histone H3 (H3S10ph), and is required for chromosome segregation when cells enter into mitosis. In resting B- and T-lymphocytes, phosphorylation by AURKB leads to enhance its activity, thereby maintaining transcription in resting lymphocytes. Regulates Hox gene expression via histone H2A deubiquitination. Prefers nucleosomal substrates. Does not deubiquitinate histone H2B. Also deubiquitinates non-histone proteins, such as ribosomal protein RPS27A: deubiquitination of monoubiquitinated RPS27A promotes maturation of the 40S ribosomal subunit. Also mediates deubiquitination of tektin proteins (TEKT1, TEKT2, TEK3, TEKT4 and TEKT5), promoting their stability. This is Ubiquitin carboxyl-terminal hydrolase 16 from Homo sapiens (Human).